The following is a 445-amino-acid chain: Exodeoxyribonuclease 7 large subunit (445 aa).

It belongs to the XseA family. In terms of assembly, heterooligomer composed of large and small subunits.

Its subcellular location is the cytoplasm. It catalyses the reaction Exonucleolytic cleavage in either 5'- to 3'- or 3'- to 5'-direction to yield nucleoside 5'-phosphates.. Its function is as follows. Bidirectionally degrades single-stranded DNA into large acid-insoluble oligonucleotides, which are then degraded further into small acid-soluble oligonucleotides. This chain is Exodeoxyribonuclease 7 large subunit, found in Delftia acidovorans (strain DSM 14801 / SPH-1).